A 740-amino-acid polypeptide reads, in one-letter code: ATP-dependent DNA helicase Hel308 (740 aa).

ATP contacts are provided by residues Gln-28 and 46-53 (IPTASGKT). In terms of domain architecture, Helicase ATP-binding spans 33-204 (RQGLLDGKNL…WMDAALVQSE (172 aa)). The DEAH box signature appears at 149–152 (DEVH). Residues 236–436 (EVNSLVADTL…EPAMRAHALS (201 aa)) enclose the Helicase C-terminal domain. Positions 716–740 (VDHTPPETEEQPQVSGQSTLFSFDG) are disordered. A compositionally biased stretch (polar residues) spans 726–740 (QPQVSGQSTLFSFDG).

Belongs to the helicase family. Hel308 subfamily. As to quaternary structure, monomer.

It carries out the reaction Couples ATP hydrolysis with the unwinding of duplex DNA by translocating in the 3'-5' direction.. The enzyme catalyses ATP + H2O = ADP + phosphate + H(+). DNA-dependent ATPase and 3'-5' DNA helicase that may be involved in repair of stalled replication forks. The polypeptide is ATP-dependent DNA helicase Hel308 (Methanocella arvoryzae (strain DSM 22066 / NBRC 105507 / MRE50)).